Reading from the N-terminus, the 247-residue chain is PHD finger protein ALFIN-LIKE 3 (247 aa).

A disordered region spans residues 147–178; that stretch reads DRSGVDSSGKSKHSTKRTGEGQVKRSRVVAEE. The segment at 188–240 adopts a PHD-type zinc-finger fold; sequence ETFCGTCGGLYNANEFWIGCDICERWFHGKCVRITPAKAEHIKHYKCPDCSSS.

This sequence belongs to the Alfin family. In terms of assembly, interacts with H3K4me3 and to a lesser extent with H3K4me2.

It is found in the nucleus. Functionally, histone-binding component that specifically recognizes H3 tails trimethylated on 'Lys-4' (H3K4me3), which mark transcription start sites of virtually all active genes. The polypeptide is PHD finger protein ALFIN-LIKE 3 (Oryza sativa subsp. indica (Rice)).